A 269-amino-acid polypeptide reads, in one-letter code: SLFPLSLLFFLAAAYPGVGSALGRRTKRAQSPKGSPLAPSGTSVPFWVRMSPEFVAVQPGKSVQLNCSNSCPQPQNSSLRTPLRQGKTLRGPGWVSYQLLDVRAWSSLAHCLVTCAGKTRWATSRITAYKPPHSVILEPPVLKGRKYTLRCHVTQVFPVGYLVVTLRHGSRVIYSESLERFTGLDLANVTLTYEFAAGPRDFWQPVICHARLNLDGLVVRNSSAPITLMLAWSSAPTALASVSIAALVGILLTVGAAYLCKCLAMKSQA.

The signal sequence occupies residues 1-20; it reads SLFPLSLLFFLAAAYPGVGS. Residues 21 to 238 are Extracellular-facing; that stretch reads ALGRRTKRAQ…MLAWSSAPTA (218 aa). 2 consecutive Ig-like C2-type domains span residues 60 to 122 and 144 to 215; these read GKSV…TRWA and GRKY…LNLD. 4 N-linked (GlcNAc...) asparagine glycosylation sites follow: Asn66, Asn76, Asn188, and Asn221. 4 cysteine pairs are disulfide-bonded: Cys67-Cys111, Cys67-Cys115, Cys71-Cys115, and Cys151-Cys208. A helical membrane pass occupies residues 239–259; that stretch reads LASVSIAALVGILLTVGAAYL. Residues 260–269 are Cytoplasmic-facing; sequence CKCLAMKSQA.

This sequence belongs to the immunoglobulin superfamily. ICAM family. In terms of processing, N- and O-glycosylated.

Its subcellular location is the cell membrane. In terms of biological role, ICAM proteins are ligands for the leukocyte adhesion protein LFA-1 (integrin alpha-L/beta-2). ICAM4 is also a ligand for alpha-4/beta-1 and alpha-V integrins. In Pan troglodytes (Chimpanzee), this protein is Intercellular adhesion molecule 4 (ICAM4).